Consider the following 149-residue polypeptide: MERTFVMVKPDGVQRGLVGDVIRRFEAKGFKLVGLKLVSVSRELAEQHYGVHRERPFFGSLVEFIISVPVVAMVWEGKGAIAAARKIIGATNPLEAEPGTIRGDFGVDIGRNLIHGSDGPDTAASEIALWFSESELANWEPATKAWLYE.

Residues Lys9, Phe57, Arg85, Thr91, Arg102, and Asn112 each contribute to the ATP site. Catalysis depends on His115, which acts as the Pros-phosphohistidine intermediate.

Belongs to the NDK family. In terms of assembly, homotetramer. Mg(2+) serves as cofactor.

It localises to the cytoplasm. The enzyme catalyses dZDP + ATP = dZTP + ADP. It catalyses the reaction a 2'-deoxyribonucleoside 5'-diphosphate + ATP = a 2'-deoxyribonucleoside 5'-triphosphate + ADP. It carries out the reaction a ribonucleoside 5'-diphosphate + ATP = a ribonucleoside 5'-triphosphate + ADP. It participates in purine metabolism. Functionally, major role in the synthesis of nucleoside triphosphates other than ATP. The ATP gamma phosphate is transferred to the NDP beta phosphate via a ping-pong mechanism, using a phosphorylated active-site intermediate. In terms of biological role, (Microbial infection) Catalyzes the phosphorylation of dZDP to dZTP, when the bacterium is infected by a phage that produces the substrate for the synthesis of dZTP (2- amino-2'-deoxyadenosine 5'-triphosphate), which is then used by the phage as a DNA polymerase substrate. The polypeptide is Nucleoside diphosphate kinase (Picosynechococcus sp. (strain ATCC 27264 / PCC 7002 / PR-6) (Agmenellum quadruplicatum)).